The sequence spans 491 residues: Allene oxide synthase 3 (491 aa).

Residues Lys104, His135, and Lys139 each coordinate heme b. (13S)-hydroperoxy-(9Z,11E)-octadecadienoate is bound by residues Asn296 and Lys302. Asn296 serves as a coordination point for (13S)-hydroperoxy-(9Z,11E,15Z)-octadecatrienoate. Positions 442 and 444 each coordinate heme b.

It belongs to the cytochrome P450 family. Heme b is required as a cofactor. In terms of tissue distribution, expressed in roots. Not detected in aerial tissues, including cotyledons, leaves, stems and flower buds.

The enzyme catalyses (13S)-hydroperoxy-(9Z,11E,15Z)-octadecatrienoate = (9Z,13S,15Z)-12,13-epoxyoctadeca-9,11,15-trienoate + H2O. It carries out the reaction (13S)-hydroperoxy-(9Z,11E)-octadecadienoate = (9Z,13S)-12,13-epoxyoctadeca-9,11-dienoate + H2O. The catalysed reaction is (9Z,13S,15Z)-12,13-epoxyoctadeca-9,11,15-trienoate = (9S,13S,15Z)-12-oxophyto-10,15-dienoate. Its function is as follows. Cytochrome P450 metabolizing both 13- and 9-hydroperoxides of linoleic and linolenic acids, but with a marked preference for 9-hydroperoxy fatty acids. Catalyzes not only the synthesis of allene oxide, but also its hydrolysis and cyclization. The first step is the synthesis of (12Z)-9,10-epoxyoctadeca-10,12-dienoic acid (9,10-EOD) and the final products are (9R)-alpha-ketol and the racemic cis-10-oxo-11-phytoenoic acid. The cyclase activity possesses regiospecificity and (9Z)-12,13-epoxyoctadeca-9,11-dienoic acid (12,13-EOD) is significantly less efficient as a substrate for cyclopentenone production than 9,10-EOD. Has no hydroperoxide lyase activity. May play a defensive role against soil-borne pests that affect roots or juvenile tissues as they emerge from the germinating seed. This Solanum lycopersicum (Tomato) protein is Allene oxide synthase 3.